A 153-amino-acid polypeptide reads, in one-letter code: Ribonuclease H (153 aa).

In terms of domain architecture, RNase H type-1 spans 4 to 146; that stretch reads NNEIVEIYTD…CDRLATEQIK (143 aa). Positions 13, 51, 73, and 138 each coordinate Mg(2+).

The protein belongs to the RNase H family. As to quaternary structure, monomer. The cofactor is Mg(2+).

The protein resides in the cytoplasm. The catalysed reaction is Endonucleolytic cleavage to 5'-phosphomonoester.. In terms of biological role, endonuclease that specifically degrades the RNA of RNA-DNA hybrids. This is Ribonuclease H from Caldanaerobacter subterraneus subsp. tengcongensis (strain DSM 15242 / JCM 11007 / NBRC 100824 / MB4) (Thermoanaerobacter tengcongensis).